A 264-amino-acid chain; its full sequence is Proteasome assembly chaperone 2 (264 aa).

T137 bears the Phosphothreonine mark.

Belongs to the PSMG2 family. Forms a heterodimer with PSMG1. The PSMG1-PSMG2 heterodimer interacts directly with the PSMA5 and PSMA7 proteasome alpha subunits. Degraded by the proteasome upon completion of 20S proteasome maturation.

Its subcellular location is the nucleus. In terms of biological role, chaperone protein which promotes assembly of the 20S proteasome as part of a heterodimer with PSMG1. The PSMG1-PSMG2 heterodimer binds to the PSMA5 and PSMA7 proteasome subunits, promotes assembly of the proteasome alpha subunits into the heteroheptameric alpha ring and prevents alpha ring dimerization. This chain is Proteasome assembly chaperone 2, found in Bos taurus (Bovine).